Reading from the N-terminus, the 554-residue chain is MSEAEARPTNFIRQIIDEDLASGKHTTVHTRFPPEPNGYLHIGHAKSICLNFGIAQDYKGQCNLRFDDTNPVKEDIEYVESIKNDVEWLGFHWSGNVRYSSDYFDQLHAYAIELINKGLAYVDELTPEQIREYRGTLTQPGKNSPYRDRSVEENLALFEKMRTGGFEEGKACLRAKIDMASPFIVMRDPVLYRIKFAEHHQTGNKWCIYPMYDFTHCISDALEGITHSLCTLEFQDNRRLYDWVLDNITIPVHPRQYEFSRLNLEYTVMSKRKLNLLVTDKHVEGWDDPRMPTISGLRRRGYTAASIREFCKRIGVTKQDNTIEMASLESCIREDLNENAPRAMAVIDPVKLVIENYQGEGEMVTMPNHPNKPEMGSRQVPFSGEIWIDRADFREEANKQYKRLVLGKEVRLRNAYVIKAERVEKDAEGNITTIFCTYDADTLSKDPADGRKVKGVIHWVSAAHALPVEIRLYDRLFSVPNPGAADDFLSVINPESLVIKQGFAEPSLKDAVAGKAFQFEREGYFCLDSRHSTAEKPVFNRTVGLRDTWAKVGE.

A 'HIGH' region motif is present at residues 34 to 44; sequence PEPNGYLHIGH. ATP-binding positions include 35 to 37 and 41 to 47; these read EPN and HIGHAKS. L-glutamine contacts are provided by aspartate 67 and tyrosine 212. Residues threonine 231, 261-262, and 269-271 contribute to the ATP site; these read RL and MSK. The short motif at 268–272 is the 'KMSKS' region element; sequence VMSKR. Residues 317–324 are interaction with tRNA; that stretch reads TKQDNTIE.

This sequence belongs to the class-I aminoacyl-tRNA synthetase family. In terms of assembly, monomer.

It localises to the cytoplasm. The enzyme catalyses tRNA(Gln) + L-glutamine + ATP = L-glutaminyl-tRNA(Gln) + AMP + diphosphate. The sequence is that of Glutamine--tRNA ligase from Escherichia coli O17:K52:H18 (strain UMN026 / ExPEC).